Reading from the N-terminus, the 298-residue chain is Putative olfactory receptor 10D4 (298 aa).

At 1 to 23 (MRNHTMVTEFILLGIPETEGLET) the chain is on the extracellular side. Asn-3 carries N-linked (GlcNAc...) asparagine glycosylation. A helical membrane pass occupies residues 24-44 (ALLFLFSSFYLCTLLGNVLIL). The Cytoplasmic portion of the chain corresponds to 45–52 (TAIISSTR). A helical transmembrane segment spans residues 53-73 (LHTPMYFFLGNLSIFDLGFSS). Topologically, residues 74 to 97 (TTVPKMLFYLSGNSHAISYAGCVS) are extracellular. Residues Cys-95 and Cys-187 are joined by a disulfide bond. Residues 98–118 (QLFFYHFLGCTECFLYTVMAC) form a helical membrane-spanning segment. Topologically, residues 119–137 (DRFVAICFPLRYTVIMNHR) are cytoplasmic. Residues 138–158 (VCFMLATGTWMIGCVHAMILT) form a helical membrane-spanning segment. Over 159 to 195 (PLTFQLPYCGPNKVGYYFCDIPAVLPLACKDTSLAQR) the chain is Extracellular. Residues 196 to 215 (VGFTNVGLLSLICFFLILVS) form a helical membrane-spanning segment. At 216 to 235 (YTCIGISISKIRSAEGRQRA) the chain is on the cytoplasmic side. A helical membrane pass occupies residues 236–256 (FSTCSAHLTAILCAYGPVIVI). The Extracellular segment spans residues 257 to 267 (YLQPNPSALLG). A helical transmembrane segment spans residues 268–288 (SIIQILNNLVTPMLNPLIYSL). Topologically, residues 289–298 (RNKDVKSDQP) are cytoplasmic.

The protein belongs to the G-protein coupled receptor 1 family.

The protein localises to the cell membrane. Functionally, odorant receptor. This Homo sapiens (Human) protein is Putative olfactory receptor 10D4 (OR10D4P).